The chain runs to 190 residues: MNKPTREEAKEAVRTLLRFIGEDPTREGLLKTPDRVINSYMEIFSGYGKDVQEILNTKFYDTYNFQDLISLEGIKFTSFCEHHILPFNGTVHIAYIPDNCIIGVSKLARIVNIFSRRLQIQEKMTVQIAESIQESLKPLGVAIKISAFHSCMSMRGVMHDNSVMNTMYYTGIFAEQQKYRHEFLNFIAKR.

Residues cysteine 80, histidine 83, and cysteine 151 each coordinate Zn(2+).

This sequence belongs to the GTP cyclohydrolase I family. Toroid-shaped homodecamer, composed of two pentamers of five dimers.

The enzyme catalyses GTP + H2O = 7,8-dihydroneopterin 3'-triphosphate + formate + H(+). Its pathway is cofactor biosynthesis; 7,8-dihydroneopterin triphosphate biosynthesis; 7,8-dihydroneopterin triphosphate from GTP: step 1/1. The sequence is that of GTP cyclohydrolase 1 from Rickettsia typhi (strain ATCC VR-144 / Wilmington).